Reading from the N-terminus, the 349-residue chain is Ion-translocating oxidoreductase complex subunit D (349 aa).

3 helical membrane passes run 36–56, 77–99, and 124–144; these read CAFFGWGTLIQVLLAIIVALS, SAMLTAILIGVAIPPLAPWWMIV, and AMAAYVLLLVSFPLQMTTWIA. Threonine 185 is subject to FMN phosphoryl threonine. Transmembrane regions (helical) follow at residues 212–232, 239–259, 265–285, 291–311, and 315–335; these read STGVGWFWVNLAYLAGGIVLL, WHISTGVLAGLFVASSVGFLL, ASPLFHLFSGATMLAAFFIAT, ATSPRGRIIFGALIGVLVYII, and GGYPDAFAFAVLLANLCAPFI.

The protein belongs to the NqrB/RnfD family. As to quaternary structure, the complex is composed of six subunits: RnfA, RnfB, RnfC, RnfD, RnfE and RnfG. FMN is required as a cofactor.

Its subcellular location is the cell inner membrane. In terms of biological role, part of a membrane-bound complex that couples electron transfer with translocation of ions across the membrane. The polypeptide is Ion-translocating oxidoreductase complex subunit D (Shewanella oneidensis (strain ATCC 700550 / JCM 31522 / CIP 106686 / LMG 19005 / NCIMB 14063 / MR-1)).